A 312-amino-acid polypeptide reads, in one-letter code: Putative 1-aminocyclopropane-1-carboxylate deaminase (312 aa).

An N6-(pyridoxal phosphate)lysine modification is found at Lys-42.

This sequence belongs to the ACC deaminase/D-cysteine desulfhydrase family. The cofactor is pyridoxal 5'-phosphate.

It catalyses the reaction 1-aminocyclopropane-1-carboxylate + H2O = 2-oxobutanoate + NH4(+). The polypeptide is Putative 1-aminocyclopropane-1-carboxylate deaminase (Thermotoga maritima (strain ATCC 43589 / DSM 3109 / JCM 10099 / NBRC 100826 / MSB8)).